Reading from the N-terminus, the 148-residue chain is IQ domain-containing protein F5 (148 aa).

2 IQ domains span residues 11–40 (ETSA…SAWI) and 67–96 (KTWA…AVRI).

In Mus musculus (Mouse), this protein is IQ domain-containing protein F5 (Iqcf5).